A 387-amino-acid polypeptide reads, in one-letter code: MTTLTNLLDLDPAQLIAYCGELGEKPFRAKQLQRWIHQFGASDFDAMTDLAKSLRDKLATRAIIAAPAVISDHTSADGTRKWLVDVGQGNAVETVFIPEENRGTLCISTQAGCAVNCRFCSTGKQGFNRNLSVGEVIGQLWMAEFELRRTKGIEPGPKGERQITNVVMMGMGEPLLNYEPTVTALKLMLDDNAYGLSRRRVTLSTSGVVPMIDKLSQDCAVALAVSLHASNDALRDGLVPLNKKYPLVELMAACKRYLEFAPRDFVTFEYCMLDGVNDSDQHARELIALVRQADVPCKFNLIPFNPFPESGLTRSHNPRIKAFAQVLMDAGIVTTVRKTRGDDIDAACGQLAGEVQDRTRVQDRMKKMAEYQEKFGKNFGRIVEISS.

Glu93 (proton acceptor) is an active-site residue. Positions 99–343 constitute a Radical SAM core domain; it reads EENRGTLCIS…TTVRKTRGDD (245 aa). A disulfide bond links Cys106 and Cys348. [4Fe-4S] cluster-binding residues include Cys113, Cys117, and Cys120. S-adenosyl-L-methionine contacts are provided by residues 172-173, Ser204, 226-228, and Asn305; these read GE and SLH. Catalysis depends on Cys348, which acts as the S-methylcysteine intermediate.

This sequence belongs to the radical SAM superfamily. RlmN family. It depends on [4Fe-4S] cluster as a cofactor.

Its subcellular location is the cytoplasm. The catalysed reaction is adenosine(2503) in 23S rRNA + 2 reduced [2Fe-2S]-[ferredoxin] + 2 S-adenosyl-L-methionine = 2-methyladenosine(2503) in 23S rRNA + 5'-deoxyadenosine + L-methionine + 2 oxidized [2Fe-2S]-[ferredoxin] + S-adenosyl-L-homocysteine. It catalyses the reaction adenosine(37) in tRNA + 2 reduced [2Fe-2S]-[ferredoxin] + 2 S-adenosyl-L-methionine = 2-methyladenosine(37) in tRNA + 5'-deoxyadenosine + L-methionine + 2 oxidized [2Fe-2S]-[ferredoxin] + S-adenosyl-L-homocysteine. In terms of biological role, specifically methylates position 2 of adenine 2503 in 23S rRNA and position 2 of adenine 37 in tRNAs. m2A2503 modification seems to play a crucial role in the proofreading step occurring at the peptidyl transferase center and thus would serve to optimize ribosomal fidelity. This chain is Dual-specificity RNA methyltransferase RlmN, found in Janthinobacterium sp. (strain Marseille) (Minibacterium massiliensis).